A 1090-amino-acid polypeptide reads, in one-letter code: Aminopeptidase-like protein AC3.5 (1090 aa).

At 1–77 (MEDVDLGKDR…KPKKRIACSP (77 aa)) the chain is on the cytoplasmic side. Low complexity predominate over residues 21–33 (GNGSASNLNNRNN). The segment at 21 to 71 (GNGSASNLNNRNNIPLSEKAAKEPLQTQPQEAPPAPKPKVQKQKPPVKPKK) is disordered. Residues 59-71 (KVQKQKPPVKPKK) are compositionally biased toward basic residues. The helical; Signal-anchor for type II membrane protein transmembrane segment at 78-98 (GSAICLFLLAVAAIIFAAFLG) threads the bilayer. The Lumenal portion of the chain corresponds to 99–1090 (HYLTKQNYEM…DEMESSEEQE (992 aa)). N-linked (GlcNAc...) asparagine glycans are attached at residues Asn-115, Asn-123, Asn-143, Asn-176, and Asn-230. A disordered region spans residues 217-259 (VTKRAKKSVDSGTNSTSEMPEGSGEEAMATTATTTTTESTTPV). Low complexity predominate over residues 241 to 257 (EEAMATTATTTTTESTT). N-linked (GlcNAc...) asparagine glycosylation is found at Asn-402, Asn-710, Asn-723, Asn-789, Asn-894, Asn-919, Asn-964, and Asn-993. Residues 1069-1080 (YLDGKMKGPAKD) show a composition bias toward basic and acidic residues. Positions 1069–1090 (YLDGKMKGPAKDDEMESSEEQE) are disordered. The segment covering 1081-1090 (DEMESSEEQE) has biased composition (acidic residues).

The protein belongs to the peptidase M1 family.

The protein localises to the membrane. This is Aminopeptidase-like protein AC3.5 from Caenorhabditis elegans.